The following is a 368-amino-acid chain: Peptide chain release factor 2 (368 aa).

Position 250 is an N5-methylglutamine (Gln250).

The protein belongs to the prokaryotic/mitochondrial release factor family. Post-translationally, methylated by PrmC. Methylation increases the termination efficiency of RF2.

It localises to the cytoplasm. In terms of biological role, peptide chain release factor 2 directs the termination of translation in response to the peptide chain termination codons UGA and UAA. The polypeptide is Peptide chain release factor 2 (Chlamydia trachomatis serovar L2b (strain UCH-1/proctitis)).